The chain runs to 233 residues: Transmembrane protein 40 (233 aa).

Methionine 1 bears the N-acetylmethionine mark. Polar residues predominate over residues 1–14; it reads METSASSSQPQDNS. Positions 1–143 are disordered; the sequence is METSASSSQP…RRGSDPASGE (143 aa). Low complexity predominate over residues 50–70; the sequence is SSSSSSSSSSSSSSSSSSSSS. The span at 93–104 shows a compositional bias: gly residues; that stretch reads YPHGNGSPGPGH. Residues 105–114 are compositionally biased toward basic and acidic residues; that stretch reads GEPDVLKDEL. Serine 137 carries the post-translational modification Phosphoserine. The next 2 helical transmembrane spans lie at 160 to 180 and 187 to 207; these read FFHF…YHYY and LGVG…FGLV.

Its subcellular location is the membrane. The polypeptide is Transmembrane protein 40 (TMEM40) (Homo sapiens (Human)).